The primary structure comprises 108 residues: Putative double-stranded DNA mimic protein PBPRA1522 (108 aa).

The protein belongs to the putative dsDNA mimic protein family.

In terms of biological role, may act as a double-stranded DNA (dsDNA) mimic. Probably regulates the activity of a dsDNA-binding protein. In Photobacterium profundum (strain SS9), this protein is Putative double-stranded DNA mimic protein PBPRA1522.